We begin with the raw amino-acid sequence, 209 residues long: ATP synthase subunit delta (209 aa).

Belongs to the ATPase delta chain family. As to quaternary structure, F-type ATPases have 2 components, F(1) - the catalytic core - and F(0) - the membrane proton channel. F(1) has five subunits: alpha(3), beta(3), gamma(1), delta(1), epsilon(1). F(0) has three main subunits: a(1), b(2) and c(10-14). The alpha and beta chains form an alternating ring which encloses part of the gamma chain. F(1) is attached to F(0) by a central stalk formed by the gamma and epsilon chains, while a peripheral stalk is formed by the delta and b chains.

Its subcellular location is the cell inner membrane. In terms of biological role, f(1)F(0) ATP synthase produces ATP from ADP in the presence of a proton or sodium gradient. F-type ATPases consist of two structural domains, F(1) containing the extramembraneous catalytic core and F(0) containing the membrane proton channel, linked together by a central stalk and a peripheral stalk. During catalysis, ATP synthesis in the catalytic domain of F(1) is coupled via a rotary mechanism of the central stalk subunits to proton translocation. This protein is part of the stalk that links CF(0) to CF(1). It either transmits conformational changes from CF(0) to CF(1) or is implicated in proton conduction. This is ATP synthase subunit delta from Psychrobacter sp. (strain PRwf-1).